The primary structure comprises 350 residues: MQGGSSGIGYGLKYQARCISDVKADRDHTSFLTGTLSLKEENEVHLLRLSSGGSELLCEGLFSHPNEIWDLASSPFDQRIFSTVFSTGDSYGAAIWQIPEPYGQSNSSTLECVASLDAHVGKINCVLWCPSGNSDKLISMDEQNLVFWSLDSSKKSAEVLSKESAGMRHSLSGGAWNPHDVNSVAATSESSIQFWDLRTMKKNNSIERAHVRNVDYNLKREHILVSADDESGIHLWDLRKTKFPVQELPGHTHWTWAVRCNPEYEELILSVGTDSAVNLWFASASSEHKTSESPVEASRQRVNPLLNSYTDYEDSVYGLAWSSREPWIFASLSYDGRVVIESVKPFLPRR.

6 WD repeats span residues 39–79 (KEEN…FDQR), 118–158 (AHVG…KSAE), 166–205 (GMRHSLSGGAWNPHDVNSVAATSESSIQFWDLRTMKKNNS), 206–246 (IERA…FPVQ), 250–290 (GHTH…EHKT), and 311–350 (DYEDSVYGLAWSSREPWIFASLSYDGRVVIESVKPFLPRR).

In terms of assembly, interacts with ABI5 and DDB1A and DWA1.

It localises to the nucleus. It participates in protein modification; protein ubiquitination. In terms of biological role, component of the CUL4-RBX1-DDB1-DWA1/DWA2 E3 ubiquitin-protein ligase complex that acts as a negative regulator in abscisic acid (ABA) signaling. May function as the substrate recognition module within this complex leading to ABI5 degradation. Functionally redundant with DWA1. The polypeptide is WD repeat-containing protein DWA2 (DWA2) (Arabidopsis thaliana (Mouse-ear cress)).